A 192-amino-acid chain; its full sequence is Ubiquitin-conjugating enzyme E2 1 (192 aa).

Residues 1–28 (MTTPSRRRLMRDFKKLQEDPPAGVSGAP) are disordered. Positions 4–150 (PSRRRLMRDF…VQQIVEQSWL (147 aa)) constitute a UBC core domain. C88 serves as the catalytic Glycyl thioester intermediate. Residues 171-192 (AAPGANDADDDRMDEGASGSNA) form a disordered region.

Belongs to the ubiquitin-conjugating enzyme family. In terms of assembly, interacts with ubr-1 and rfp-1. Interacts with ubc-13.

The catalysed reaction is S-ubiquitinyl-[E1 ubiquitin-activating enzyme]-L-cysteine + [E2 ubiquitin-conjugating enzyme]-L-cysteine = [E1 ubiquitin-activating enzyme]-L-cysteine + S-ubiquitinyl-[E2 ubiquitin-conjugating enzyme]-L-cysteine.. It functions in the pathway protein modification; protein ubiquitination. In terms of biological role, catalyzes the covalent attachment of ubiquitin to other proteins. The sequence is that of Ubiquitin-conjugating enzyme E2 1 (ubc-1) from Caenorhabditis elegans.